We begin with the raw amino-acid sequence, 526 residues long: Ribonuclease Y (526 aa).

The helical transmembrane segment at 10 to 30 (ITFILLIVVGALGGALVGYFI) threads the bilayer. A KH domain is found at 216 to 279 (TVTVVEIPNE…EVAKRALTIL (64 aa)). Positions 342-435 (VLKHSIEVAF…VAAADALSAA (94 aa)) constitute an HD domain.

It belongs to the RNase Y family.

It is found in the cell membrane. Its function is as follows. Endoribonuclease that initiates mRNA decay. This is Ribonuclease Y from Acholeplasma laidlawii (strain PG-8A).